The sequence spans 171 residues: UPF0398 protein MGAS9429_Spy1349 (171 aa).

It belongs to the UPF0398 family.

The protein is UPF0398 protein MGAS9429_Spy1349 of Streptococcus pyogenes serotype M12 (strain MGAS9429).